The following is a 141-amino-acid chain: MLMPKRTKYRKMMKGRNRGYARSGYTLAFGDIALKAVEAGRINSRQIESARISATRHIKRNGKIWIRVFPAKPLTAKPLETRMGKGKGSVDQWVMNIKPGRIIFEMAGVPEELAREALTLALHKLPFKTKIITAEMSNEIF.

The protein belongs to the universal ribosomal protein uL16 family. In terms of assembly, part of the 50S ribosomal subunit.

Its function is as follows. Binds 23S rRNA and is also seen to make contacts with the A and possibly P site tRNAs. In Sulfurimonas denitrificans (strain ATCC 33889 / DSM 1251) (Thiomicrospira denitrificans (strain ATCC 33889 / DSM 1251)), this protein is Large ribosomal subunit protein uL16.